A 1011-amino-acid chain; its full sequence is Rap guanine nucleotide exchange factor 4 (1011 aa).

The DEP domain occupies 216 to 291 (SRAPHMIRDR…DKYLFYRFLD (76 aa)). 3',5'-cyclic AMP-binding positions include 422–425 (GKLA) and 432–433 (RA). The region spanning 496–634 (QKYTVMSGTP…ELEKIVKQIS (139 aa)) is the N-terminal Ras-GEF domain. The Ras-GEF domain maps to 772-1009 (SSKDLAYQMT…SQMSHRLEPR (238 aa)).

Interacts with RAP1B, RIMS1 and RIMS2. Probably part of a complex with RIMS2 and GTP-activated RAB3A. As to expression, expressed in cerebellum, pituitary, adrenal gland and liver.

Its subcellular location is the cytoplasm. The protein localises to the membrane. Functionally, guanine nucleotide exchange factor (GEF) for RAP1A, RAP1B and RAP2A small GTPases that is activated by binding cAMP. Seems not to activate RAB3A. Involved in cAMP-dependent, PKA-independent exocytosis through interaction with RIMS2. The chain is Rap guanine nucleotide exchange factor 4 (Rapgef4) from Mus musculus (Mouse).